The chain runs to 508 residues: UTP--glucose-1-phosphate uridylyltransferase (508 aa).

S13 is subject to Phosphoserine. UTP is bound by residues 113–116 (LNGG), K127, Q190, and G222. 115 to 116 (GG) contributes to the substrate binding site. K127 serves as a coordination point for Mg(2+). Residues H223 and 251–253 (NID) contribute to the substrate site. Positions 253 and 396 each coordinate UTP. A Mg(2+)-binding site is contributed by D253. K396 is an active-site residue. At T426 the chain carries Phosphothreonine. The residue at position 434 (S434) is a Phosphoserine. Position 438 is an N6-acetyllysine (K438). A phosphoserine mark is found at S448 and S461. Residues 457-508 (HLTVSGDVTFGKNVSLKGTVIIIANHGDRIDIPPGAVLENKIVSGNLRILDH) form an oligomerization region. Residues 502–503 (NL) form a critical for end-to-end subunit interaction region.

The protein belongs to the UDPGP type 1 family. Homooctamer.

The protein localises to the cytoplasm. It carries out the reaction alpha-D-glucose 1-phosphate + UTP + H(+) = UDP-alpha-D-glucose + diphosphate. Its pathway is glycan biosynthesis; glycogen biosynthesis. In terms of biological role, UTP--glucose-1-phosphate uridylyltransferase catalyzing the conversion of glucose-1-phosphate into UDP-glucose, a crucial precursor for the production of glycogen. The sequence is that of UTP--glucose-1-phosphate uridylyltransferase (Ugp2) from Mus musculus (Mouse).